Here is a 63-residue protein sequence, read N- to C-terminus: uncharacterized protein (63 aa).

A compositionally biased stretch (basic and acidic residues) spans 1-17; the sequence is MRYTDSRKLTPETDANH. The tract at residues 1–32 is disordered; sequence MRYTDSRKLTPETDANHKTASPQPIRRISSQT. Residues 18-32 are compositionally biased toward polar residues; the sequence is KTASPQPIRRISSQT.

It to Y.enterocolitica HemP.

This is an uncharacterized protein from Escherichia coli (strain K12).